The primary structure comprises 262 residues: S-methyl-5'-thioadenosine phosphorylase (262 aa).

Phosphate contacts are provided by residues serine 12, 54-55, and 87-88; these read RH and SA. Residue methionine 185 participates in substrate binding. Position 186 (threonine 186) interacts with phosphate. Position 209–211 (209–211) interacts with substrate; that stretch reads DYD.

This sequence belongs to the PNP/MTAP phosphorylase family. MTAP subfamily. Homohexamer. Dimer of a homotrimer.

The catalysed reaction is S-methyl-5'-thioadenosine + phosphate = 5-(methylsulfanyl)-alpha-D-ribose 1-phosphate + adenine. Its pathway is amino-acid biosynthesis; L-methionine biosynthesis via salvage pathway; S-methyl-5-thio-alpha-D-ribose 1-phosphate from S-methyl-5'-thioadenosine (phosphorylase route): step 1/1. Its function is as follows. Catalyzes the reversible phosphorylation of S-methyl-5'-thioadenosine (MTA) to adenine and 5-methylthioribose-1-phosphate. Involved in the breakdown of MTA, a major by-product of polyamine biosynthesis. Responsible for the first step in the methionine salvage pathway after MTA has been generated from S-adenosylmethionine. Has broad substrate specificity with 6-aminopurine nucleosides as preferred substrates. The polypeptide is S-methyl-5'-thioadenosine phosphorylase (Thermofilum pendens (strain DSM 2475 / Hrk 5)).